The primary structure comprises 344 residues: Follistatin (344 aa).

Residues 1-29 form the signal peptide; it reads MVRPRHQPGGLCLLLLLLCQFMEDRSAQA. A TB domain is found at 30-103; sequence GNCWLRQAKN…TCDNVDCGPG (74 aa). 18 disulfide bridges follow: Cys32–Cys55, Cys42–Cys88, Cys56–Cys91, Cys95–Cys106, Cys100–Cys116, Cys118–Cys150, Cys122–Cys143, Cys132–Cys164, Cys168–Cys179, Cys173–Cys189, Cys192–Cys225, Cys196–Cys218, Cys207–Cys239, Cys245–Cys256, Cys250–Cys267, Cys270–Cys302, Cys274–Cys295, and Cys284–Cys316. Residues 94-117 enclose the Follistatin-like 1 domain; sequence TCDNVDCGPGKKCRMNKKNKPRCV. One can recognise a Kazal-like 1 domain in the interval 112 to 166; sequence NKPRCVCAPDCSNITWKGPVCGLDGKTYRNECALLKARCKEQPELEVQYQGKCKK. A glycan (N-linked (GlcNAc...) asparagine) is linked at Asn124. The region spanning 167–190 is the Follistatin-like 2 domain; sequence TCRDVNCPGSSTCVVDQTNNAYCV. The Kazal-like 2 domain occupies 186 to 241; the sequence is NAYCVTCNRICPEPTSSEQYLCGNDGVTYSSACHLRKATCLLGRSIGLAYEGKCIK. In terms of domain architecture, Follistatin-like 3 spans 244–268; it reads SCEDIQCTGGKKCLWDFKVGRGRCS. In terms of domain architecture, Kazal-like 3 spans 264-318; it reads RGRCSLCDELCPDSKSEEPVCASDNATYASECAMKEAACSSGVLLEVKHSGSCNS. Asn288 is a glycosylation site (N-linked (GlcNAc...) asparagine). A disordered region spans residues 314–344; it reads GSCNSISEDTEEEEEDEDQDYSFPISSILEW. Positions 321–333 are enriched in acidic residues; that stretch reads EDTEEEEEDEDQD.

In terms of assembly, interacts with GDF11. Interacts with activin A/INHBA. Interacts with myostatin/MSTN.

The protein resides in the secreted. The protein localises to the nucleus. Its subcellular location is the nucleolus. Multifunctional regulatory protein whose primary function is to antagonize members of the transforming growth factor beta (TGF-beta) superfamily including activin, myostatin, GDF11 or bone morphogenetic proteins (BMPs). Mechanistically, binds to these ligands in the extracellular space, blocking their type II receptor-binding site to inhibit downstream signaling. Plays an essential role in muscle fiber formation and growth both by preventing the repressive effects of myostatin and through SMAD3/AKT/mTOR signaling independently of myostatin. Also promotes neural differentiation by antagonizing the action BMP4. Acts as a specific inhibitor of the biosynthesis and secretion of pituitary follicle stimulating hormone (FSH) by sequestering activin A/INHBA. On the other hand, translocates into the nucleus where it down-regulates rRNA synthesis and ribosome biogenesis to maintain cellular energy homeostasis by binding to rDNA. This is Follistatin from Equus caballus (Horse).